The following is a 21-amino-acid chain: Japonicin-2 (21 aa).

Cysteines 14 and 21 form a disulfide.

In terms of tissue distribution, expressed by the skin glands.

Its subcellular location is the secreted. Its function is as follows. Antibacterial activity against the Gram-negative bacterium E.coli and the Gram-positive bacterium S.aureus. This is Japonicin-2 from Rana japonica (Japanese reddish frog).